We begin with the raw amino-acid sequence, 521 residues long: Probable cytochrome P450 12d1 proximal, mitochondrial (521 aa).

The N-terminal 19 residues, Met-1–Ser-19, are a transit peptide targeting the mitochondrion. Residue Cys-467 participates in heme binding.

The protein belongs to the cytochrome P450 family. Requires heme as cofactor.

The protein localises to the mitochondrion membrane. The polypeptide is Probable cytochrome P450 12d1 proximal, mitochondrial (Cyp12d1-p) (Drosophila melanogaster (Fruit fly)).